The sequence spans 99 residues: UPF0213 protein PC1_0597 (99 aa).

The region spanning 8–83 (PQWYLYILRT…KQLSKNQKER (76 aa)) is the GIY-YIG domain.

It belongs to the UPF0213 family.

The chain is UPF0213 protein PC1_0597 from Pectobacterium carotovorum subsp. carotovorum (strain PC1).